The following is a 596-amino-acid chain: Protein kinase C iota type (596 aa).

Polar residues predominate over residues 1–12 (MPTQRDSSTMSH). Residues 1-23 (MPTQRDSSTMSHTVAGGGSGDHS) are disordered. Proline 2 bears the N-acetylproline mark. A required for interaction with RAB2 region spans residues 2 to 28 (PTQRDSSTMSHTVAGGGSGDHSHQVRV). Positions 2–253 (PTQRDSSTMS…KASSSLGLQD (252 aa)) are regulatory domain. Phosphothreonine is present on threonine 3. 2 positions are modified to phosphoserine: serine 7 and serine 8. Phosphothreonine is present on threonine 9. In terms of domain architecture, PB1 spans 25-108 (QVRVKAYYRG…SELLIHVFPC (84 aa)). The interval 72-91 (DEEGDPCTVSSQLELEEAFR) is interaction with PARD6A. The short motif at 125-134 (YRRGARRWRK) is the Pseudosubstrate element. The segment at 140 to 190 (GHTFQAKRFNRRAHCAICTDRIWGLGRQGYKCINCKLLVHKKCHKLVTIEC) adopts a Phorbol-ester/DAG-type zinc-finger fold. Residues 221–246 (PSSHESLDQVGEEKEAMNTRESGKAS) form a disordered region. Basic and acidic residues predominate over residues 225 to 243 (ESLDQVGEEKEAMNTRESG). The region spanning 254–522 (FDLLRVIGRG…FADIQGHPFF (269 aa)) is the Protein kinase domain. 260-268 (IGRGSYAKV) lines the ATP pocket. Phosphotyrosine; by SRC is present on residues tyrosine 265 and tyrosine 280. Lysine 283 is an ATP binding site. Position 334 is a phosphotyrosine; by SRC (tyrosine 334). Residue aspartate 378 is the Proton acceptor of the active site. Threonine 412 carries the post-translational modification Phosphothreonine; by PDPK1. The AGC-kinase C-terminal domain maps to 523 to 594 (RNVDWDMMEQ…INPLLMSAEE (72 aa)). A Phosphothreonine modification is found at threonine 564.

Belongs to the protein kinase superfamily. AGC Ser/Thr protein kinase family. PKC subfamily. As to quaternary structure, forms a complex with SQSTM1 and MP2K5. Interacts directly with SQSTM1. Interacts with IKBKB. Interacts with PARD6A, PARD6B and PARD6G. Part of a quaternary complex containing aPKC, PARD3, a PARD6 protein (PARD6A, PARD6B or PARD6G) and a GTPase protein (CDC42 or RAC1). Part of a complex with LLGL1 and PARD6B. Interacts with ADAP1/CENTA1. Interaction with SMG1, through the ZN-finger domain, activates the kinase activity. Interacts with CDK7. Forms a complex with RAB2A and GAPDH involved in recruitment onto the membrane of vesicular tubular clusters (VTCs). Interacts with ECT2 ('Thr-359' phosphorylated form). Interacts with VAMP2. Interacts with WDFY2 (via WD repeats 1-3). In terms of processing, phosphorylation at Thr-412 in the activation loop is not mandatory for activation. Upon neuronal growth factor (NGF) stimulation, phosphorylated by SRC at Tyr-265, Tyr-280 and Tyr-334. Phosphorylation at Tyr-265 facilitates binding to KPNB1/importin-beta regulating entry of PRKCI into the nucleus. Phosphorylation on Tyr-334 is important for NF-kappa-B stimulation. Phosphorylated at Thr-564 during the initial phase of long term potentiation.

Its subcellular location is the cytoplasm. It localises to the membrane. The protein resides in the endosome. It is found in the nucleus. It carries out the reaction L-seryl-[protein] + ATP = O-phospho-L-seryl-[protein] + ADP + H(+). The enzyme catalyses L-threonyl-[protein] + ATP = O-phospho-L-threonyl-[protein] + ADP + H(+). Its activity is regulated as follows. Atypical PKCs (PRKCI and PRKCZ) exhibit an elevated basal enzymatic activity (that may be due to the interaction with SMG1 or SQSTM1) and are not regulated by diacylglycerol, phosphatidylserine, phorbol esters or calcium ions. Two specific sites, Thr-412 (activation loop of the kinase domain) and Thr-564 (turn motif), need to be phosphorylated for its full activation. Might also be a target for novel lipid activators that are elevated during nutrient-stimulated insulin secretion. Calcium- and diacylglycerol-independent serine/ threonine-protein kinase that plays a general protective role against apoptotic stimuli, is involved in NF-kappa-B activation, cell survival, differentiation and polarity, and contributes to the regulation of microtubule dynamics in the early secretory pathway. Is necessary for BCR-ABL oncogene-mediated resistance to apoptotic drug in leukemia cells, protecting leukemia cells against drug-induced apoptosis. In cultured neurons, prevents amyloid beta protein-induced apoptosis by interrupting cell death process at a very early step. In glioblastoma cells, may function downstream of phosphatidylinositol 3-kinase (PI(3)K) and PDPK1 in the promotion of cell survival by phosphorylating and inhibiting the pro-apoptotic factor BAD. Can form a protein complex in non-small cell lung cancer (NSCLC) cells with PARD6A and ECT2 and regulate ECT2 oncogenic activity by phosphorylation, which in turn promotes transformed growth and invasion. In response to nerve growth factor (NGF), acts downstream of SRC to phosphorylate and activate IRAK1, allowing the subsequent activation of NF-kappa-B and neuronal cell survival. Functions in the organization of the apical domain in epithelial cells by phosphorylating EZR. This step is crucial for activation and normal distribution of EZR at the early stages of intestinal epithelial cell differentiation. Forms a protein complex with LLGL1 and PARD6B independently of PARD3 to regulate epithelial cell polarity. Plays a role in microtubule dynamics in the early secretory pathway through interaction with RAB2A and GAPDH and recruitment to vesicular tubular clusters (VTCs). In human coronary artery endothelial cells (HCAEC), is activated by saturated fatty acids and mediates lipid-induced apoptosis. Involved in early synaptic long term potentiation phase in CA1 hippocampal cells and short term memory formation. In Pongo abelii (Sumatran orangutan), this protein is Protein kinase C iota type (PRKCI).